The sequence spans 290 residues: Agglutinin-2 (290 aa).

The first 35 residues, 1–35 (MAISNTNLLQTKKPISLPLLAFITLFLMLLNRVNS), serve as a signal peptide directing secretion. N-linked (GlcNAc...) asparagine glycosylation is present at asparagine 155. The Mn(2+) site is built by glutamate 165 and aspartate 167. Residues aspartate 167, asparagine 171, and aspartate 175 each contribute to the Ca(2+) site. Positions 175 and 180 each coordinate Mn(2+). Asparagine 200 carries N-linked (GlcNAc...) asparagine glycosylation.

It belongs to the leguminous lectin family. Homotetramer.

Mannose/glucose binding bark lectin. In terms of biological role, bark lectins are storage proteins that probably maintain stocks of nitrogen during dormant period. Self-aggregatable molecules that can bind their own carbohydrate side chains. They could also play a role in the plant's defense against phytophagous invertebrates or herbivorous higher animals. The chain is Agglutinin-2 from Cladrastis kentukea (Yellow wood).